The following is a 275-amino-acid chain: Cell division protein FtsQ (275 aa).

A disordered region spans residues 1–20 (MRDLHKKKPRPVTQNRLKKP). Over 1 to 38 (MRDLHKKKPRPVTQNRLKKPPKTCKPINYRGILKKTAK) the chain is Cytoplasmic. A helical membrane pass occupies residues 39–61 (VVGGAALISAVGCAGYGIYRIIA). Residues 62 to 275 (GTTFFKLERI…YSDKIIVKKV (214 aa)) lie on the Periplasmic side of the membrane. The POTRA domain occupies 66-134 (FKLERIEVSE…NTLSMQIAER (69 aa)).

Belongs to the FtsQ/DivIB family. FtsQ subfamily.

It localises to the cell inner membrane. Its function is as follows. Essential cell division protein. The chain is Cell division protein FtsQ from Geotalea daltonii (strain DSM 22248 / JCM 15807 / FRC-32) (Geobacter daltonii).